Reading from the N-terminus, the 503-residue chain is Zinc-regulated transporter 3 (503 aa).

3 helical membrane-spanning segments follow: residues 8 to 28 (LLFS…VPLL), 42 to 62 (LVNY…LYML), and 75 to 95 (FPGL…VHAF). The interval 112-171 (GSHIHSKSHSHSHSHSHADSHSNFSNDHDLENAPSEHGYATSSSSVSENDPLITKDSDRP) is disordered. Positions 115-126 (IHSKSHSHSHSH) are enriched in basic residues. The segment covering 127–142 (SHADSHSNFSNDHDLE) has biased composition (basic and acidic residues). A phosphoserine mark is found at S178 and S188. Disordered regions lie at residues 221–244 (QSER…DKDH) and 274–295 (HHSS…FSSP). The span at 280 to 295 (PENYGSNQLSHSFSSP) shows a compositional bias: polar residues. The next 5 membrane-spanning stretches (helical) occupy residues 336–356 (IGMQ…FIIF), 371–391 (IFLS…LPFY), 398–418 (WVAI…GALI), 438–458 (LLSV…QTGI), and 482–502 (GTTC…SALF).

This sequence belongs to the ZIP transporter (TC 2.A.5) family.

The protein resides in the vacuole membrane. Its function is as follows. Transports zinc from storage in the vacuole to the cytoplasm. This Saccharomyces cerevisiae (strain ATCC 204508 / S288c) (Baker's yeast) protein is Zinc-regulated transporter 3 (ZRT3).